The primary structure comprises 410 residues: 23S rRNA (uracil(747)-C(5))-methyltransferase (410 aa).

[4Fe-4S] cluster is bound by residues cysteine 61, cysteine 67, cysteine 70, and cysteine 137. Residues glutamine 253, tyrosine 279, glutamate 300, and aspartate 341 each contribute to the S-adenosyl-L-methionine site. Cysteine 367 (nucleophile) is an active-site residue.

Belongs to the class I-like SAM-binding methyltransferase superfamily. RNA M5U methyltransferase family.

It catalyses the reaction uridine(747) in 23S rRNA + S-adenosyl-L-methionine = 5-methyluridine(747) in 23S rRNA + S-adenosyl-L-homocysteine + H(+). Its activity is regulated as follows. Activated by magnesium ions. Functionally, catalyzes the formation of 5-methyl-uridine at position equivalent to 747 (m5U747) in 23S rRNA (m5U859 in the P.abyssi numbering). In Pyrococcus abyssi (strain GE5 / Orsay), this protein is 23S rRNA (uracil(747)-C(5))-methyltransferase.